Consider the following 688-residue polypeptide: Polyribonucleotide nucleotidyltransferase (688 aa).

2 residues coordinate Mg(2+): Asp-484 and Asp-490. The 60-residue stretch at 550 to 609 (PTTEIFNVAPDKIIEIIGQGGRVIREIVEKFEVKIDLNKPSGEVKIMGNKERVLKTKEFI) folds into the KH domain. Residues 626–688 (DEVLEAQVKR…NKGKIALDLA (63 aa)) form the S1 motif domain.

This sequence belongs to the polyribonucleotide nucleotidyltransferase family. Mg(2+) is required as a cofactor.

The protein localises to the cytoplasm. It carries out the reaction RNA(n+1) + phosphate = RNA(n) + a ribonucleoside 5'-diphosphate. Involved in mRNA degradation. Catalyzes the phosphorolysis of single-stranded polyribonucleotides processively in the 3'- to 5'-direction. The polypeptide is Polyribonucleotide nucleotidyltransferase (Helicobacter acinonychis (strain Sheeba)).